A 92-amino-acid chain; its full sequence is Integration host factor subunit beta (92 aa).

This sequence belongs to the bacterial histone-like protein family. Heterodimer of an alpha and a beta chain.

In terms of biological role, this protein is one of the two subunits of integration host factor, a specific DNA-binding protein that functions in genetic recombination as well as in transcriptional and translational control. The chain is Integration host factor subunit beta from Vibrio cholerae serotype O1 (strain ATCC 39541 / Classical Ogawa 395 / O395).